We begin with the raw amino-acid sequence, 249 residues long: Type III pantothenate kinase (249 aa).

Residue 6–13 (DCGNSFIK) coordinates ATP. Residues Tyr-93 and 100–103 (GLDR) each bind substrate. The active-site Proton acceptor is the Asp-102. A K(+)-binding site is contributed by Asp-122. Thr-125 lines the ATP pocket. Thr-181 is a substrate binding site.

It belongs to the type III pantothenate kinase family. As to quaternary structure, homodimer. NH4(+) serves as cofactor. The cofactor is K(+).

The protein resides in the cytoplasm. The catalysed reaction is (R)-pantothenate + ATP = (R)-4'-phosphopantothenate + ADP + H(+). It participates in cofactor biosynthesis; coenzyme A biosynthesis; CoA from (R)-pantothenate: step 1/5. Functionally, catalyzes the phosphorylation of pantothenate (Pan), the first step in CoA biosynthesis. The protein is Type III pantothenate kinase of Pseudomonas fluorescens (strain SBW25).